A 335-amino-acid chain; its full sequence is Tryptophan--tRNA ligase (335 aa).

ATP-binding positions include 13–15 and 21–22; these read QPS and GN. The 'HIGH' region signature appears at 14-22; that stretch reads PSGELTIGN. Position 138 (aspartate 138) interacts with L-tryptophan. ATP is bound by residues 150-152, isoleucine 189, and 198-202; these read GKD and KMSKS. A 'KMSKS' region motif is present at residues 198 to 202; that stretch reads KMSKS.

This sequence belongs to the class-I aminoacyl-tRNA synthetase family. Homodimer.

It is found in the cytoplasm. The enzyme catalyses tRNA(Trp) + L-tryptophan + ATP = L-tryptophyl-tRNA(Trp) + AMP + diphosphate + H(+). Its function is as follows. Catalyzes the attachment of tryptophan to tRNA(Trp). This chain is Tryptophan--tRNA ligase, found in Clostridium acetobutylicum (strain ATCC 824 / DSM 792 / JCM 1419 / IAM 19013 / LMG 5710 / NBRC 13948 / NRRL B-527 / VKM B-1787 / 2291 / W).